The following is a 57-amino-acid chain: Large ribosomal subunit protein bL32 (57 aa).

This sequence belongs to the bacterial ribosomal protein bL32 family.

This is Large ribosomal subunit protein bL32 from Streptomyces avermitilis (strain ATCC 31267 / DSM 46492 / JCM 5070 / NBRC 14893 / NCIMB 12804 / NRRL 8165 / MA-4680).